Consider the following 580-residue polypeptide: Type II methyltransferase M.BanIII (580 aa).

This sequence belongs to the N(4)/N(6)-methyltransferase family.

It catalyses the reaction a 2'-deoxyadenosine in DNA + S-adenosyl-L-methionine = an N(6)-methyl-2'-deoxyadenosine in DNA + S-adenosyl-L-homocysteine + H(+). Functionally, a gamma subtype methylase, recognizes the double-stranded sequence 5'-ATCGAT-3', methylates A-5 on both strands, and protects the DNA from cleavage by the BanIII endonuclease. The sequence is that of Type II methyltransferase M.BanIII (banIIIM) from Aneurinibacillus aneurinilyticus (Bacillus aneurinolyticus).